The sequence spans 843 residues: KN motif and ankyrin repeat domain-containing protein 2 (843 aa).

The tract at residues 1–31 is disordered; it reads MAQVLHVPAPFPGTPGQASPAAFPSKEPDPP. Positions 1–72 are interaction with AIFM1; sequence MAQVLHVPAP…AVQRRPRLGS (72 aa). Phosphoserine occurs at positions 19, 83, 86, 89, and 92. An Omega-N-methylarginine modification is found at arginine 105. The segment at 161-182 is disordered; the sequence is LAGVGLLPPTPRSSGLSTPVAP. Threonine 170 is subject to Phosphothreonine. Coiled coils occupy residues 183–234 and 282–313; these read SAGH…QLKS and DGEAALVAKVAVLETQLKKALQELRAAQTQQV. Residue threonine 331 is modified to Phosphothreonine. Position 358 is a phosphoserine (serine 358). Residues 410–577 form a disordered region; sequence TERSCTGAPR…VASGPDPEEE (168 aa). Low complexity predominate over residues 457-470; the sequence is AAASQDSQAADGAG. A Phosphoserine modification is found at serine 532. Polar residues predominate over residues 547–561; that stretch reads ATTSLEGPQLSQESQ. An ANK 0; degenerate repeat occupies 606-643; sequence RELKVAYTTVLQEWLRLACRSDAHPELVRRHLVTFRAM. The tract at residues 661–827 is interaction with NCOA1; it reads TALHYSVSHA…YSRMNIKCSF (167 aa). ANK repeat units lie at residues 673–703, 707–740, 745–774, 778–808, and 812–842; these read PVVRQLLDSGVCHVDKLNRAGYSPIMLTALA, TQDDIETILQLFRLGNVNAKASQAGQTALMLAVS, DVVRALLACEADVNIQDEDGSTALMCACEH, EITGLLLAVPSCDISLTDRDGSTALMVALDA, and EIASMLYSRMNIKCSFAPMSDYESPASSSAE.

In terms of assembly, interacts (non-phosphorylated form) with NCOA1; NCOA2 AND NCOA3. Interacts with AIFM1. Interacts with ARHGDIA; the interaction is direct and may regulate the interaction of ARHGDIA with RHOA, RAC1 and CDC42. Interacts (via ANK repeats 1-5) with KIF21A (via residues 1148-1169). In terms of processing, phosphorylated by casein kinase II upon estrogen stimulation. Phosphorylation induces the release by KANK2 of NCOA1 and its translocation to the nucleus where NCOA1 can activate gene transcription. As to expression, widely expressed with highest levels in liver and skeletal muscle.

Its subcellular location is the cytoplasm. The protein localises to the mitochondrion. Involved in transcription regulation by sequestering in the cytoplasm nuclear receptor coactivators such as NCOA1, NCOA2 and NCOA3. Involved in regulation of caspase-independent apoptosis by sequestering the proapoptotic factor AIFM1 in mitochondria. Pro-apoptotic stimuli can induce its proteasomal degradation allowing the translocation of AIFM1 to the nucleus to induce apoptosis. Involved in the negative control of vitamin D receptor signaling pathway. Involved in actin stress fibers formation through its interaction with ARHGDIA and the regulation of the Rho signaling pathway. May thereby play a role in cell adhesion and migration, regulating for instance podocytes migration during development of the kidney. Through the Rho signaling pathway may also regulate cell proliferation. The sequence is that of KN motif and ankyrin repeat domain-containing protein 2 (Kank2) from Mus musculus (Mouse).